The sequence spans 718 residues: Protein Hook homolog 3 (718 aa).

Met1 carries the N-acetylmethionine modification. The segment at Met1–Val164 is sufficient for interaction with microtubules. Phosphoserine is present on residues Ser3 and Ser6. In terms of domain architecture, Calponin-homology (CH) spans Ala10–Ala126. Coiled-coil stretches lie at residues Gly167–Gln433 and Glu462–Ser667. Ser238 carries the phosphoserine modification. The interval Glu553–Arg718 is required for association with Golgi. A required for interaction with MSR1 region spans residues His556–Arg718. Positions Glu682 to Arg718 are disordered. Phosphoserine is present on residues Ser693 and Ser707. Residues Ala696–Ser707 show a composition bias toward low complexity.

Belongs to the hook family. In terms of assembly, self-associates. Component of the FTS/Hook/FHIP complex (FHF complex), composed of AKTIP/FTS, FHIP1B, and one or more members of the Hook family of proteins HOOK1, HOOK2, and HOOK3. May interact directly with AKTIP/FTS, HOOK1 and HOOK2. Associates with several subunits of the homotypic vesicular sorting complex (the HOPS complex) including VPS16 and VPS41; these interactions may be indirect. Interacts with MSR1, and this association is stimulated by ligand binding to MSR1. Interacts with microtubules. Part of a tripartite complex with dynein and dynactin, acts an adapter linking the dynein motor complex and dynactin. Interacts with dynein intermediate chain and dynactin (DCTN1). Interacts with CCDC181. Interacts with LRGUK. As to quaternary structure, (Microbial infection) Interacts with Salmonella typhimurium spiC.

It is found in the cytoplasm. The protein localises to the cytoskeleton. Its subcellular location is the golgi apparatus. Acts as an adapter protein linking the dynein motor complex to various cargos and converts dynein from a non-processive to a highly processive motor in the presence of dynactin. Facilitates the interaction between dynein and dynactin and activates dynein processivity (the ability to move along a microtubule for a long distance without falling off the track). Predominantly recruits 2 dyneins, which increases both the force and speed of the microtubule motor. Component of the FTS/Hook/FHIP complex (FHF complex). The FHF complex may function to promote vesicle trafficking and/or fusion via the homotypic vesicular protein sorting complex (the HOPS complex). May regulate clearance of endocytosed receptors such as MSR1. Participates in defining the architecture and localization of the Golgi complex. FHF complex promotes the distribution of AP-4 complex to the perinuclear area of the cell. Its function is as follows. (Microbial infection) May serve as a target for the spiC protein from Salmonella typhimurium, which inactivates it, leading to a strong alteration in cellular trafficking. The chain is Protein Hook homolog 3 from Homo sapiens (Human).